A 99-amino-acid chain; its full sequence is uncharacterized protein (99 aa).

This is an uncharacterized protein from Haemophilus influenzae (strain ATCC 51907 / DSM 11121 / KW20 / Rd).